The chain runs to 672 residues: METGRSRGGGAAVSERGGGARAGVCGRQEQAGALAADMDSHCECAAETPAAEPPSGKINKAAFKLFKKRKSGGTMPSIFGVKNKGDGKSSGPTGMVRSRTHDGLAEVLVLEGSKKEEPPGGSDHSGARPIPGPPKPSGPGLGSLASSSVAKSHSFFSLLKKNGRSETGKGDHAEASKAGGKQKRGLKGIFSSMRWHRRDKRGKEEEEKAVRAAGPGNLVLPGSLTASLECVKEEPPRAARRPDSPGQDASRHAAGEPAGGEQAPASAESAPERICLEAGSPTGSGDQSSRGEDAEGHRREEKPGAALESGAGEVQAAEDASKTGDVPIKTVPLVDSEGGSGRASAVPDPSSVDPPSDPSADRICLMFSDVTSLKSFDSLTGCGDIIADPEEEAGPSCDKHVPGPGKPVLSKKNASVVAYQGGGEEMASPDQVDDTYLPEFWDMLSQTEDQGQGTQEGAAKAATASDIKLAPETSSDTRCGEAAKDMSSVKRRRLHRIPIESQQKEEPKHPEKEHQEGVPNSDEGYWDSTTPGPEEESISNSSSSKKVVIPRDSDSGDALCDLYVEPEASPATLPATEDPPCLSRLKPVSPGTITCPLRTPGSLLKDSKIPISIKHLSNLPSSHPVVHQQPARSEVPRTKIPVSKVLVRRVSNRGLAGTTIRAAACHDSAKKL.

The span at 1–21 shows a compositional bias: gly residues; the sequence is METGRSRGGGAAVSERGGGAR. Disordered regions lie at residues 1–23, 74–360, and 443–560; these read METG…ARAG, TMPS…DPSA, and MLSQ…DALC. Residues 142 to 158 are compositionally biased toward low complexity; sequence GSLASSSVAKSHSFFSL. At Ser154 the chain carries Phosphoserine. Composition is skewed to basic and acidic residues over residues 163-175 and 201-210; these read GRSE…HAEA and RGKEEEEKAV. 3 positions are modified to phosphoserine: Ser223, Ser227, and Ser244. Over residues 230–254 the composition is skewed to basic and acidic residues; the sequence is CVKEEPPRAARRPDSPGQDASRHAA. Residues 255–269 show a composition bias toward low complexity; sequence GEPAGGEQAPASAES. A Phosphoserine modification is found at Ser284. Over residues 289–303 the composition is skewed to basic and acidic residues; it reads SRGEDAEGHRREEKP. The segment covering 343-354 has biased composition (low complexity); sequence ASAVPDPSSVDP. A phosphoserine mark is found at Ser356 and Ser359. Positions 446–457 are enriched in low complexity; sequence QTEDQGQGTQEG. 2 stretches are compositionally biased toward basic and acidic residues: residues 478 to 488 and 502 to 516; these read RCGEAAKDMSS and QQKE…EHQE.

It belongs to the Amer family. Interacts with APC.

Its subcellular location is the cell membrane. Functionally, negative regulator of the canonical Wnt signaling pathway involved in neuroectodermal patterning. Acts by specifically binding phosphatidylinositol 4,5-bisphosphate (PtdIns(4,5)P2), translocating to the cell membrane and interacting with key regulators of the canonical Wnt signaling pathway, such as components of the beta-catenin destruction complex. The sequence is that of APC membrane recruitment protein 2 (Amer2) from Mus musculus (Mouse).